Reading from the N-terminus, the 470-residue chain is ATP synthase subunit beta (470 aa).

155–162 contributes to the ATP binding site; that stretch reads GGAGVGKT.

The protein belongs to the ATPase alpha/beta chains family. In terms of assembly, F-type ATPases have 2 components, CF(1) - the catalytic core - and CF(0) - the membrane proton channel. CF(1) has five subunits: alpha(3), beta(3), gamma(1), delta(1), epsilon(1). CF(0) has three main subunits: a(1), b(2) and c(9-12). The alpha and beta chains form an alternating ring which encloses part of the gamma chain. CF(1) is attached to CF(0) by a central stalk formed by the gamma and epsilon chains, while a peripheral stalk is formed by the delta and b chains.

It localises to the cell inner membrane. It carries out the reaction ATP + H2O + 4 H(+)(in) = ADP + phosphate + 5 H(+)(out). Functionally, produces ATP from ADP in the presence of a proton gradient across the membrane. The catalytic sites are hosted primarily by the beta subunits. This Oleidesulfovibrio alaskensis (strain ATCC BAA-1058 / DSM 17464 / G20) (Desulfovibrio alaskensis) protein is ATP synthase subunit beta.